The primary structure comprises 922 residues: Coronin-7 (922 aa).

WD repeat units lie at residues 75 to 115 (CHSD…EALP), 124 to 163 (PEEL…PLTE), 166 to 205 (AHKD…QASQ), and 209 to 253 (AHEN…SALA). The disordered stretch occupies residues 419-467 (DTDLSEGFSSPSSLMSPSTPSSLGPSLSSTSGIGTSPSQRSLQSLLGPS). Low complexity predominate over residues 427–456 (SSPSSLMSPSTPSSLGPSLSSTSGIGTSPS). Residues serine 459 and serine 462 each carry the phosphoserine modification. A Glycyl lysine isopeptide (Lys-Gly) (interchain with G-Cter in ubiquitin) cross-link involves residue lysine 469. 4 WD repeats span residues 539-581 (QNGT…NVLT), 589-629 (GHTE…ERLK), 632-671 (GHQD…LPLQ), and 725-765 (DVAP…PFFL). The tract at residues 858–922 (GMTPVSQAPR…FEGVDEDEWD (65 aa)) is disordered. Positions 881 to 893 (LEEKSDQQKKEEL) are enriched in basic and acidic residues. Serine 912 is subject to Phosphoserine.

This sequence belongs to the WD repeat coronin family. In terms of assembly, interacts with clathrin adapter AP1 complex. This interaction takes place at Golgi membranes and not AP1-positive endosomal membranes. Interacts (when ubiquitinated at Lys-469) with EPS15. The membrane-associated form is phosphorylated on tyrosine residues. Post-translationally, ubiquitinated via 'Lys-33'-linked ubiquitin chains by the BCR(KLHL20) E3 ubiquitin ligase complex: 'Lys-33'-linked ubiquitination promotes interaction with EPS15 and facilitates actin polymerization at the trans-Golgi network, thereby facilitating post-Golgi trafficking. Deubiquitinated by ZRANB1/TRABID. As to expression, in the adult, widely expressed with highest levels in brain, thymus and kidney and low levels in skeletal and heart muscle. Not expressed in lung. In the eye, strongly expressed in the outer plexiform layer of the retina. In the intestine, expressed both in terminally differentiated epithelial cells and in crypt epithelium. In the embryo, strongest expression is seen in brain, thymus, intestine, apical epidermal layers of the skin and developing lens fibers of the eye.

It is found in the golgi apparatus membrane. The protein resides in the golgi apparatus. Its subcellular location is the trans-Golgi network. The protein localises to the cytoplasmic vesicle. It localises to the cytoplasm. It is found in the cytosol. Functionally, F-actin regulator involved in anterograde Golgi to endosome transport: upon ubiquitination via 'Lys-33'-linked ubiquitin chains by the BCR(KLHL20) E3 ubiquitin ligase complex, interacts with EPS15 and localizes to the trans-Golgi network, where it promotes actin polymerization, thereby facilitating post-Golgi trafficking. May play a role in the maintenance of the Golgi apparatus morphology. This Mus musculus (Mouse) protein is Coronin-7 (Coro7).